The chain runs to 131 residues: uncharacterized protein (131 aa).

Residues 16–71 (MSEQERDEVLEDDDDDEDNKSSQQERDEFVEDDDNNSIQSSPSCAQPLLTQYHDDG) form a disordered region. Residues 20–33 (ERDEVLEDDDDDED) are compositionally biased toward acidic residues.

This is an uncharacterized protein from Dictyostelium discoideum (Social amoeba).